Reading from the N-terminus, the 666-residue chain is Neurexin-2-beta (666 aa).

Residues 1–10 are compositionally biased toward gly residues; the sequence is MPPGGSGPGG. Positions 1 to 30 are disordered; sequence MPPGGSGPGGCPRRPPALAGPLPPPPPPPP. Residues 1 to 50 form the signal peptide; sequence MPPGGSGPGGCPRRPPALAGPLPPPPPPPPPPLLPLLPLLLLLLLGAAEG. The segment covering 21 to 30 has biased composition (pro residues); that stretch reads PLPPPPPPPP. The Extracellular segment spans residues 51 to 590; the sequence is ARVSSSLSTT…EVIRESSSTT (540 aa). The region spanning 91 to 299 is the Laminin G-like domain; the sequence is TTYIFGKGGA…HLRLVGEGPS (209 aa). Residues aspartate 143 and valine 160 each coordinate Ca(2+). Asparagine 190 is a glycosylation site (N-linked (GlcNAc...) asparagine). Ca(2+) is bound by residues isoleucine 242 and asparagine 244. Residues 327-346 are disordered; the sequence is ATTTTRRGRSPTLRDSTTQN. A glycan (O-linked (Xyl...) (heparan sulfate) serine) is linked at serine 354. Disordered stretches follow at residues 412 to 443 and 479 to 580; these read ATQD…CEEP and TLLS…PGAV. The chain crosses the membrane as a helical span at residues 591 to 611; it reads GMVVGIVAAAALCILILLYAM. The Cytoplasmic segment spans residues 612 to 666; that stretch reads YKYRNRDEGSYQVDQSRNYISNSAQSNGAVVKEKAPAAPKTPSKAKKNKDKEYYV. The tract at residues 633 to 666 is disordered; sequence NSAQSNGAVVKEKAPAAPKTPSKAKKNKDKEYYV.

The protein belongs to the neurexin family. Interacts (via cytoplasmic C-terminal region) with CASK. Specific isoforms bind alpha-dystroglycan and neuroligins NLGN1, NLGN2 and NLGN3. Interacts with CBLN1, CBLN2 and, less avidly, with CBLN4. Interacts with CLSTN3. Post-translationally, O-glycosylated; contains heparan sulfate. Heparan sulfate attachment is required for synapse development by mediating interactions with neuroligins.

Its subcellular location is the presynaptic cell membrane. Its function is as follows. Neuronal cell surface protein that may be involved in cell recognition and cell adhesion. The chain is Neurexin-2-beta (NRXN2) from Homo sapiens (Human).